The primary structure comprises 158 residues: tRNA (cytidine(34)-2'-O)-methyltransferase (158 aa).

Residues glycine 103, isoleucine 123, and serine 131 each coordinate S-adenosyl-L-methionine.

Belongs to the class IV-like SAM-binding methyltransferase superfamily. RNA methyltransferase TrmH family. TrmL subfamily. Homodimer.

The protein localises to the cytoplasm. It catalyses the reaction cytidine(34) in tRNA + S-adenosyl-L-methionine = 2'-O-methylcytidine(34) in tRNA + S-adenosyl-L-homocysteine + H(+). The enzyme catalyses 5-carboxymethylaminomethyluridine(34) in tRNA(Leu) + S-adenosyl-L-methionine = 5-carboxymethylaminomethyl-2'-O-methyluridine(34) in tRNA(Leu) + S-adenosyl-L-homocysteine + H(+). Its function is as follows. Methylates the ribose at the nucleotide 34 wobble position in the two leucyl isoacceptors tRNA(Leu)(CmAA) and tRNA(Leu)(cmnm5UmAA). Catalyzes the methyl transfer from S-adenosyl-L-methionine to the 2'-OH of the wobble nucleotide. The sequence is that of tRNA (cytidine(34)-2'-O)-methyltransferase from Ancylobacter novellus (strain ATCC 8093 / DSM 506 / JCM 20403 / CCM 1077 / IAM 12100 / NBRC 12443 / NCIMB 10456) (Starkeya novella).